A 122-amino-acid chain; its full sequence is Truncated CrmB protein (122 aa).

The protein is truncated in this strain and presumably inactive. It has similarities with variola virus CrmB, but the product is inactivated due to several premature stop codons. The chain is Truncated CrmB protein (OPG002) from Bos taurus (Bovine).